Consider the following 181-residue polypeptide: CDP-archaeol synthase (181 aa).

Transmembrane regions (helical) follow at residues 7–27 (VVVA…AVLA), 55–75 (AVGT…RPAA), 80–100 (GVVL…GAMV), 128–148 (FVVV…GDTF), and 150–170 (LPVL…TNGI).

The protein belongs to the CDP-archaeol synthase family. It depends on Mg(2+) as a cofactor.

The protein localises to the cell membrane. The enzyme catalyses 2,3-bis-O-(geranylgeranyl)-sn-glycerol 1-phosphate + CTP + H(+) = CDP-2,3-bis-O-(geranylgeranyl)-sn-glycerol + diphosphate. It participates in membrane lipid metabolism; glycerophospholipid metabolism. In terms of biological role, catalyzes the formation of CDP-2,3-bis-(O-geranylgeranyl)-sn-glycerol (CDP-archaeol) from 2,3-bis-(O-geranylgeranyl)-sn-glycerol 1-phosphate (DGGGP) and CTP. This reaction is the third ether-bond-formation step in the biosynthesis of archaeal membrane lipids. The protein is CDP-archaeol synthase of Halobacterium salinarum (strain ATCC 29341 / DSM 671 / R1).